A 189-amino-acid chain; its full sequence is Nucleoside diphosphate kinase 6 (189 aa).

6 residues coordinate ATP: K19, F68, R96, T102, R116, and N126. The active-site Pros-phosphohistidine intermediate is H129.

It belongs to the NDK family. Mg(2+) is required as a cofactor.

It catalyses the reaction a 2'-deoxyribonucleoside 5'-diphosphate + ATP = a 2'-deoxyribonucleoside 5'-triphosphate + ADP. The catalysed reaction is a ribonucleoside 5'-diphosphate + ATP = a ribonucleoside 5'-triphosphate + ADP. Major role in the synthesis of nucleoside triphosphates other than ATP. The ATP gamma phosphate is transferred to the NDP beta phosphate via a ping-pong mechanism, using a phosphorylated active-site intermediate. In Mus musculus (Mouse), this protein is Nucleoside diphosphate kinase 6 (Nme6).